We begin with the raw amino-acid sequence, 146 residues long: Angiogenin (146 aa).

The N-terminal stretch at 1–24 (MVMGLHLLLLVFILGLGLTPPTLA) is a signal peptide. At Gln-25 the chain carries Pyrrolidone carboxylic acid. The active-site Proton acceptor is the His-37. 3 disulfides stabilise this stretch: Cys-50-Cys-105, Cys-63-Cys-116, and Cys-81-Cys-131. Residues 55-59 (RLRNM) carry the Nucleolar localization signal motif. Cys-105 contributes to the tRNA binding site. Residue His-138 is the Proton donor of the active site.

This sequence belongs to the pancreatic ribonuclease family. As to quaternary structure, homodimer. Interacts with RNH1; inhibiting ANG ribonuclease activity. Interacts with PCNA.

Its subcellular location is the secreted. It is found in the nucleus. It localises to the nucleolus. The protein localises to the cytoplasm. The protein resides in the stress granule. Has weak tRNA ribonuclease activity by itself due to partial autoinhibition by its C-terminus, which folds into a short alpha-helix that partially occludes the substrate-binding site. In absence of stress, the ribonuclease activity is inhibited by RNH1 in the cytoplasm. In response to stress, dissociates from RNH1 in the cytoplasm and associates with cytoplasmic ribosomes with vacant A-sites: ribosomes directly activate the tRNA ribonuclease activity of ANG by refolding the C-terminal alpha-helix. In response to stress, the angiogenic activity of ANG is inhibited by RNH1 in the nucleus. Its function is as follows. Secreted ribonuclease that can either promote or restrict cell proliferation of target cells, depending on the context. Endocytosed in target cells via its receptor PLXNB2 and translocates to the cytoplasm or nucleus. Under stress conditions, localizes to the cytoplasm and promotes the assembly of stress granules (SGs): specifically cleaves a subset of tRNAs within anticodon loops to produce tRNA-derived stress-induced fragments (tiRNAs), resulting in translation repression and inhibition of cell proliferation. tiRNas also prevent formation of apoptosome, thereby promoting cell survival. Preferentially cleaves RNAs between a pyrimidine and an adenosine residue, suggesting that it cleaves the anticodon loop of tRNA(Ala) (32-UUAGCAU-38) after positions 33 and 36. Cleaves a subset of tRNAs, including tRNA(Ala), tRNA(Glu), tRNA(Gly), tRNA(Lys), tRNA(Val), tRNA(His), tRNA(Asp) and tRNA(Sec). Under growth conditions and in differentiated cells, translocates to the nucleus and stimulates ribosomal RNA (rRNA) transcription, including that containing the initiation site sequences of 45S rRNA, thereby promoting cell growth and proliferation. Angiogenin induces vascularization of normal and malignant tissues via its ability to promote rRNA transcription. Involved in hematopoietic stem and progenitor cell (HSPC) growth and survival by promoting rRNA transcription in growth conditions and inhibiting translation in response to stress, respectively. Mediates the crosstalk between myeloid and intestinal epithelial cells to protect the intestinal epithelial barrier integrity: secreted by myeloid cells and promotes intestinal epithelial cells proliferation and survival. Also mediates osteoclast-endothelial cell crosstalk in growing bone: produced by osteoclasts and protects the neighboring vascular cells against senescence by promoting rRNA transcription. The polypeptide is Angiogenin (ANG) (Aotus trivirgatus (Three-striped night monkey)).